The chain runs to 150 residues: Large ribosomal subunit protein bL9 (150 aa).

It belongs to the bacterial ribosomal protein bL9 family.

Functionally, binds to the 23S rRNA. The sequence is that of Large ribosomal subunit protein bL9 from Paraburkholderia phymatum (strain DSM 17167 / CIP 108236 / LMG 21445 / STM815) (Burkholderia phymatum).